A 180-amino-acid polypeptide reads, in one-letter code: Bifunctional bis(5'-adenosyl)-triphosphatase/adenylylsulfatase FHIT (180 aa).

One can recognise an HIT domain in the interval 27-134 (SYAFGPYKID…LPRKGGDFEK (108 aa)). The substrate site is built by Asn52 and Gln108. Positions 119-123 (HVHIH) match the Histidine triad motif motif. His121 serves as the catalytic Tele-AMP-histidine intermediate. Substrate is bound at residue His123.

It carries out the reaction P(1),P(3)-bis(5'-adenosyl) triphosphate + H2O = AMP + ADP + 2 H(+). The catalysed reaction is adenosine 5'-phosphosulfate + H2O = sulfate + AMP + 2 H(+). The enzyme catalyses adenosine 5'-phosphosulfate + NH4(+) = adenosine 5'-phosphoramidate + sulfate + 2 H(+). It catalyses the reaction adenosine 5'-phosphoramidate + H2O = AMP + NH4(+). In terms of biological role, possesses dinucleoside triphosphate hydrolase activity. Cleaves P(1)-P(3)-bis(5'-adenosyl) triphosphate (Ap3A) to yield AMP and ADP. Exhibits adenylylsulfatase activity, hydrolyzing adenosine 5'-phosphosulfate to yield AMP and sulfate. Exhibits adenosine 5'-monophosphoramidase activity, hydrolyzing purine nucleotide phosphoramidates with a single phosphate group such as adenosine 5'monophosphoramidate (AMP-NH2) to yield AMP and NH2. Exhibits adenylylsulfate-ammonia adenylyltransferase, catalyzing the ammonolysis of adenosine 5'-phosphosulfate resulting in the formation of adenosine 5'-phosphoramidate. The chain is Bifunctional bis(5'-adenosyl)-triphosphatase/adenylylsulfatase FHIT from Arabidopsis thaliana (Mouse-ear cress).